A 530-amino-acid polypeptide reads, in one-letter code: Cytochrome P450 monooxygenase aneG (530 aa).

N-linked (GlcNAc...) asparagine glycosylation occurs at asparagine 2. A helical membrane pass occupies residues 43–63 (WLSILGFTIGCYYVIYTFYAL). N-linked (GlcNAc...) asparagine glycosylation is present at asparagine 92. Cysteine 474 contributes to the heme binding site.

This sequence belongs to the cytochrome P450 family. Requires heme as cofactor.

It localises to the membrane. The catalysed reaction is asperaculane E + reduced [NADPH--hemoprotein reductase] + O2 = asperaculane G + oxidized [NADPH--hemoprotein reductase] + H2O + H(+). The enzyme catalyses asperaculane G + reduced [NADPH--hemoprotein reductase] + O2 = aculene D + oxidized [NADPH--hemoprotein reductase] + CO2 + 2 H2O. It catalyses the reaction asperaculane E + 2 reduced [NADPH--hemoprotein reductase] + 2 O2 = aculene D + 2 oxidized [NADPH--hemoprotein reductase] + CO2 + 3 H2O + H(+). The protein operates within secondary metabolite biosynthesis. Cytochrome P450 monooxygenase; part of the gene cluster that mediates the biosynthesis of aculenes, a unique type of norsesquiterpenes that contain a nordaucane skeleton linked to an L-proline moiety and are of mixed biosynthetic origin. The pathway begins with the synthesis of dauca-4,7-diene by the terpene cyclase aneC using farnesyl pyrophosphate (FPP) as substrate. The cytochrome P450 monooxygenase aneF then performs the initial oxidation at C-12 of dauca-4,7-diene to yield asperaculane D. Asperaculane D is substrate of the cytochrome P450 monooxygenase aneD for C-10 hydroxylation to yield asperaculane E. The cytochrome P450 monooxygenase aneG then converts asperaculane E into aculene D via C-2 oxidation. The monomodular nonribosomal peptide synthtase aneB adenylates L-proline and the thiohydrolase aneE transfers this activated L-proline derivative to aculenes D and C to produce respectively aculenes B and A. The dioxygenase aneA converts aculene D into aculene C, and aculene B into aculene A by introducing the 5,6-alkene moiety. Asperculanes A, B, C and F, as well as 14-prolyl asperculane C, might be shunt products of the pathway. The protein is Cytochrome P450 monooxygenase aneG of Aspergillus aculeatus (strain ATCC 16872 / CBS 172.66 / WB 5094).